We begin with the raw amino-acid sequence, 479 residues long: Integrin-linked protein kinase 1 (479 aa).

2 positions are modified to phosphoserine: Ser-17 and Ser-26. The disordered stretch occupies residues 29–73; that stretch reads FTRQSSLDPRRTNMRFSFGRQSSLDPIRRSPDSSKSDDEPHMSVP. The segment covering 54 to 69 has biased composition (basic and acidic residues); the sequence is PIRRSPDSSKSDDEPH. ANK repeat units lie at residues 77-106 and 110-139; these read DSTM…DVNS and DGRT…NIDA. Positions 194–461 constitute a Protein kinase domain; sequence LEVQVRKSDG…EIIIRLDKIV (268 aa). Residues 200–208 and Lys-222 each bind ATP; that span reads KSDGISKGA. Asp-319 (proton acceptor) is an active-site residue.

It belongs to the protein kinase superfamily. Ser/Thr protein kinase family. Interacts with CML9 and POT5/HAK5. Post-translationally, autophosphorylated at Ser-17 and Ser-26.

Its subcellular location is the cell membrane. The protein localises to the endoplasmic reticulum membrane. It carries out the reaction L-seryl-[protein] + ATP = O-phospho-L-seryl-[protein] + ADP + H(+). The catalysed reaction is L-threonyl-[protein] + ATP = O-phospho-L-threonyl-[protein] + ADP + H(+). With respect to regulation, kinase activity is suppressed by interaction with CML9. Functionally, functions as a link between plant defense pathways, stress responses and potassium homeostasis. Promotes osmotic stress sensitivity, responses to the bacterial-derived pathogen-associated molecular pattern (PAMP) flg22, and resistance to bacterial pathogens. Promotes the accumulation of POT5/HAK5, a potassium transporter that mediates high-affinity uptake during potassium deficiency. In Arabidopsis thaliana (Mouse-ear cress), this protein is Integrin-linked protein kinase 1.